Here is an 819-residue protein sequence, read N- to C-terminus: uncharacterized protein (819 aa).

Residue S16 is modified to Phosphoserine. Disordered stretches follow at residues 28-83 (SNTQ…PPTV) and 96-134 (PTFT…ASKI). The segment at residues 36-63 (KIRFTENENDLSPERAQKEPVSIPHGRY) is a DNA-binding region (zn(2)-C6 fungal-type). Composition is skewed to polar residues over residues 64-77 (TWST…SHLP) and 96-118 (PTFT…NDYI).

The protein localises to the nucleus. This is an uncharacterized protein from Schizosaccharomyces pombe (strain 972 / ATCC 24843) (Fission yeast).